The following is a 782-amino-acid chain: Endonuclease MutS2 (782 aa).

Glycine 336–threonine 343 lines the ATP pocket. The Smr domain occupies leucine 707–lysine 782.

It belongs to the DNA mismatch repair MutS family. MutS2 subfamily. Homodimer. Binds to stalled ribosomes, contacting rRNA.

In terms of biological role, endonuclease that is involved in the suppression of homologous recombination and thus may have a key role in the control of bacterial genetic diversity. Its function is as follows. Acts as a ribosome collision sensor, splitting the ribosome into its 2 subunits. Detects stalled/collided 70S ribosomes which it binds and splits by an ATP-hydrolysis driven conformational change. Acts upstream of the ribosome quality control system (RQC), a ribosome-associated complex that mediates the extraction of incompletely synthesized nascent chains from stalled ribosomes and their subsequent degradation. Probably generates substrates for RQC. This chain is Endonuclease MutS2, found in Staphylococcus aureus (strain COL).